The sequence spans 114 residues: Large ribosomal subunit protein uL22 (114 aa).

Belongs to the universal ribosomal protein uL22 family. Part of the 50S ribosomal subunit.

This protein binds specifically to 23S rRNA; its binding is stimulated by other ribosomal proteins, e.g. L4, L17, and L20. It is important during the early stages of 50S assembly. It makes multiple contacts with different domains of the 23S rRNA in the assembled 50S subunit and ribosome. Its function is as follows. The globular domain of the protein is located near the polypeptide exit tunnel on the outside of the subunit, while an extended beta-hairpin is found that lines the wall of the exit tunnel in the center of the 70S ribosome. This Alcanivorax borkumensis (strain ATCC 700651 / DSM 11573 / NCIMB 13689 / SK2) protein is Large ribosomal subunit protein uL22.